Consider the following 89-residue polypeptide: Helix-loop-helix protein 15 (89 aa).

Positions 1-32 (MLMEDGGLDTTSEEYRKLSKAERRKRRRATPK) are disordered. The segment covering 22 to 32 (ERRKRRRATPK) has biased composition (basic residues). The tract at residues 32–45 (KYRNLHATRERIRV) is basic motif. Residues 32–84 (KYRNLHATRERIRVESFNMAFSQLRALLPTLPVEKKLSKIEILRFSIAYISFL) enclose the bHLH domain. The interval 46 to 84 (ESFNMAFSQLRALLPTLPVEKKLSKIEILRFSIAYISFL) is helix-loop-helix motif.

As to expression, expressed in sensory head neurons of the lateral ganglion.

Its subcellular location is the nucleus. Its function is as follows. Transcription factor which binds the E box motif 5'-CA[TC][AG]TG-3'. Involved in modulating physiological aging, probably by regulating expression of branched-chain amino acid transferase-1, bcat-1. The protein is Helix-loop-helix protein 15 of Caenorhabditis elegans.